A 277-amino-acid polypeptide reads, in one-letter code: Tetrahydroxynaphthalene reductase PfmaG (277 aa).

Residues Ile36, Asp82, and Asn109 each contribute to the NADP(+) site. Active-site proton donor residues include Ser158, Ser159, and Tyr173. Residues Tyr173, Lys177, Ile206, and Thr208 each coordinate NADP(+). Residue Lys177 is the Lowers pKa of active site Tyr of the active site.

This sequence belongs to the short-chain dehydrogenases/reductases (SDR) family.

The catalysed reaction is scytalone + NADP(+) = naphthalene-1,3,6,8-tetrol + NADPH + H(+). Its pathway is pigment biosynthesis; melanin biosynthesis. In terms of biological role, tetrahydroxynaphthalene reductase; part of the gene cluster that mediates the biosynthesis of dihydroxynaphthalene (DHN)-melanin, a bluish-green pigment forming a dark layer in the conidial wall that protects the conidia from UV radiations. The first step of the pathway is the production of the pentaketide 1,3,6,8-tetrahydroxynaphthalene (1,3,6,8-THN or T4HN) by the polyketide synthase PfmaE though condensation of acetyl-CoA with malonyl-CoA. T4HN is not stable and easily oxidizes into the stable form flaviolin. T4HN is also substrate of the hydroxynaphthalene reductase PfmaG to yield scytalone. The scytalone dehydratase PfmaJ then reduces scytalone to 1,3,8-THN. 1,3,8-THN is then substrate of the hydroxynaphthalene reductase PfmaI to yield vermelone. Vermelone is further converted by the multicopper oxidase PfmaD to 1,8-DHN. Finally the laccase PFICI_06862 transforms 1,8-DHN to DHN-melanin. The roles of the 5-oxoprolinase PfmaA and the proline iminopeptidase PfmaB within the cluster have not been elucidated yet. The protein is Tetrahydroxynaphthalene reductase PfmaG of Pestalotiopsis fici (strain W106-1 / CGMCC3.15140).